A 507-amino-acid chain; its full sequence is Probable circularly permuted 1,3-beta-glucanase P23A10.11c YJL171C (507 aa).

Positions 1 to 22 (MIAKSFIASFLFLCFAFSGVKA) are cleaved as a signal peptide. The span at 228 to 264 (AAPPDSASESTPASTSYASSTTSATSTSTTSGSSGSS) shows a compositional bias: low complexity. The interval 228 to 266 (AAPPDSASESTPASTSYASSTTSATSTSTTSGSSGSSDW) is disordered. Residues 412–417 (EFDIFE) carry the ExDxxE motif motif. Residue Asn480 is glycosylated (N-linked (GlcNAc...) asparagine).

Belongs to the PGA52 family.

It localises to the secreted. The enzyme catalyses Hydrolysis of (1-&gt;3)-beta-D-glucosidic linkages in (1-&gt;3)-beta-D-glucans.. Its function is as follows. Probable circularly permuted 1,3-beta-glucanase involved in cell wall modification through beta-1,3-glucan network alterations such as increased branching or remodeling. The protein is Probable circularly permuted 1,3-beta-glucanase P23A10.11c YJL171C of Schizosaccharomyces pombe (strain 972 / ATCC 24843) (Fission yeast).